The sequence spans 304 residues: MKAQKPGLHPRNRHHQRYDLPALCQAHPDLQGYITLNPLGEQTIDFANPQAVKALNKALLAHFYAVKHWDIPDGFLCPPVPGRADYIHHLADLLAQDSGEVPKQATILDIGTGANLIFPLIGVHEYGWRFTGSEISPEAFASAQAIVNGNPGLTRQIRLRRQKESQAIFHGVIHKNETYDATLCNPPFHDSAESARAGGERKRRNLGLGADSALNFGGQQQELWCEGGEVAFISQMIRESQAFARQVKWFTSLVSRGDNLPPLYRLLTKVGAVKVVKKEMAQGQKQSRFIAWSFMDDAKRRRPF.

The protein belongs to the methyltransferase superfamily. METTL16/RlmF family.

The protein localises to the cytoplasm. The catalysed reaction is adenosine(1618) in 23S rRNA + S-adenosyl-L-methionine = N(6)-methyladenosine(1618) in 23S rRNA + S-adenosyl-L-homocysteine + H(+). Its function is as follows. Specifically methylates the adenine in position 1618 of 23S rRNA. This Klebsiella pneumoniae (strain 342) protein is Ribosomal RNA large subunit methyltransferase F.